A 217-amino-acid polypeptide reads, in one-letter code: 3,4-dihydroxy-2-butanone 4-phosphate synthase (217 aa).

D-ribulose 5-phosphate-binding positions include 37–38 (RE), Asp-42, 150–154 (RGGHT), and Glu-174. Glu-38 provides a ligand contact to Mg(2+). His-153 contacts Mg(2+).

It belongs to the DHBP synthase family. Homodimer. Mg(2+) is required as a cofactor. Requires Mn(2+) as cofactor.

It catalyses the reaction D-ribulose 5-phosphate = (2S)-2-hydroxy-3-oxobutyl phosphate + formate + H(+). Its pathway is cofactor biosynthesis; riboflavin biosynthesis; 2-hydroxy-3-oxobutyl phosphate from D-ribulose 5-phosphate: step 1/1. In terms of biological role, catalyzes the conversion of D-ribulose 5-phosphate to formate and 3,4-dihydroxy-2-butanone 4-phosphate. The protein is 3,4-dihydroxy-2-butanone 4-phosphate synthase of Escherichia coli O127:H6 (strain E2348/69 / EPEC).